The primary structure comprises 87 residues: Cell division topological specificity factor (87 aa).

The protein belongs to the MinE family.

Prevents the cell division inhibition by proteins MinC and MinD at internal division sites while permitting inhibition at polar sites. This ensures cell division at the proper site by restricting the formation of a division septum at the midpoint of the long axis of the cell. This chain is Cell division topological specificity factor, found in Aliivibrio fischeri (strain ATCC 700601 / ES114) (Vibrio fischeri).